The chain runs to 704 residues: Urea-proton symporter DUR3 (704 aa).

The next 15 helical transmembrane spans lie at 39–59 (YAVILGFGAFFAVFTSFLVWL), 80–100 (VKTGLIASVIVSQWTWAATIL), 115–135 (FWYASGATIQVLLFGVMAIEI), 159–179 (IVFLVFCLATNVVVTAMLLLG), 192–212 (LYAASFLIPLGVVVYTLAGGL), 216–236 (FLASYVHSVIVHVALVVFVFL), 291–311 (SSGGAVFGLINIVGNFGTVFV), 336–356 (LVWFAVPFSLATSLGLGALAL), 388–408 (LTMLFMAVTSAGSSELIAVSS), 435–455 (AVLGFGCFMGILAVVLNKAGV), 461–481 (YLAMGVLIGSAVIPIAFMLLW), 486–506 (AFGAILGATSGCVFGIITWLT), 527–547 (LAGNLVAILTGGLIHAVCSLV), 590–610 (AWIVKWGLVFTILIVVIWPVL), and 622–642 (FWFWAIVAIAWGTIGSIVIIG).

It belongs to the sodium:solute symporter (SSF) (TC 2.A.21) family. In terms of tissue distribution, expressed in root rhizodermis, including root hairs and cortex in more basal root zones. Expressed in shoots.

The protein localises to the cell membrane. Functionally, high-affinity urea-proton symporter involved in the active transport of urea across the plasma membrane into root cells. May play an important role in urea uptake by plant cells at low external urea concentrations. The sequence is that of Urea-proton symporter DUR3 (DUR3) from Arabidopsis thaliana (Mouse-ear cress).